A 278-amino-acid polypeptide reads, in one-letter code: MDYSYANVVPNFRLDGRLAIITGGSGGLAAVISRALLAQGADVALIDMNLERTKSAAKEVLGWGEETLKGEHASAIGQVSAWSCNIGDAEAVDATFSSINEHHGKIADLLINTAGYCENFPAETYPATNAESIMKVNGLGSFYVSQSFARPLIQNNLRGSIILIGSMSGTIVNDPQPQCMYNMSKAGVIHLVRSLACEWAKYNIRVNTLSPGYILTPLTRNVISGHTEMKEAWESKIPMKRMAEPKEFVGSILYLASETASSYTTGHNLVVDGGYECW.

Positions 28 and 49 each coordinate NADP(+). Ser166 acts as the Proton donor in catalysis. Tyr181, Lys185, Ile214, and Thr216 together coordinate NADP(+). The Proton acceptor role is filled by Tyr181. Residue Lys185 is the Lowers pKa of active site Tyr of the active site.

The protein belongs to the short-chain dehydrogenases/reductases (SDR) family.

The catalysed reaction is D-arabinitol + NAD(+) = D-ribulose + NADH + H(+). Its pathway is carbohydrate metabolism; D-arabinitol metabolism. The chain is D-arabinitol 2-dehydrogenase [ribulose-forming] (ARDH) from Scheffersomyces stipitis (strain ATCC 58785 / CBS 6054 / NBRC 10063 / NRRL Y-11545) (Yeast).